A 146-amino-acid chain; its full sequence is Hemoglobin subunit beta (146 aa).

An N-acetylvaline modification is found at V1. Residues 2 to 146 form the Globin domain; it reads HLTPEEKALV…VANALAHKYH (145 aa). Position 59 is an N6-acetyllysine (K59). H63 contributes to the heme b binding site. K82 carries the post-translational modification N6-acetyllysine. Residue H92 participates in heme b binding. The residue at position 93 (C93) is an S-nitrosocysteine. At K144 the chain carries N6-acetyllysine.

Belongs to the globin family. In terms of assembly, heterotetramer of two alpha chains and two beta chains. In terms of tissue distribution, red blood cells.

In terms of biological role, involved in oxygen transport from the lung to the various peripheral tissues. The chain is Hemoglobin subunit beta (HBB) from Trichechus inunguis (Amazon manatee).